The chain runs to 427 residues: Enolase (427 aa).

Gln163 is a (2R)-2-phosphoglycerate binding site. Residue Glu205 is the Proton donor of the active site. Residues Asp242, Glu285, and Asp312 each contribute to the Mg(2+) site. Positions 337, 366, 367, and 388 each coordinate (2R)-2-phosphoglycerate. Lys337 functions as the Proton acceptor in the catalytic mechanism.

The protein belongs to the enolase family. Mg(2+) is required as a cofactor.

The protein localises to the cytoplasm. It localises to the secreted. It is found in the cell surface. The catalysed reaction is (2R)-2-phosphoglycerate = phosphoenolpyruvate + H2O. Its pathway is carbohydrate degradation; glycolysis; pyruvate from D-glyceraldehyde 3-phosphate: step 4/5. In terms of biological role, catalyzes the reversible conversion of 2-phosphoglycerate (2-PG) into phosphoenolpyruvate (PEP). It is essential for the degradation of carbohydrates via glycolysis. In Rhodopseudomonas palustris (strain HaA2), this protein is Enolase.